The primary structure comprises 264 residues: Thymidylate synthase (264 aa).

DUMP is bound at residue Arg-21. A (6R)-5,10-methylene-5,6,7,8-tetrahydrofolate-binding site is contributed by His-51. Position 126–127 (126–127) interacts with dUMP; sequence RR. Cys-146 acts as the Nucleophile in catalysis. Residues 166 to 169, Asn-177, and 207 to 209 each bind dUMP; these read RSAD and HLY. Asp-169 is a (6R)-5,10-methylene-5,6,7,8-tetrahydrofolate binding site. Residue Ala-263 participates in (6R)-5,10-methylene-5,6,7,8-tetrahydrofolate binding.

The protein belongs to the thymidylate synthase family. Bacterial-type ThyA subfamily. In terms of assembly, homodimer.

It is found in the cytoplasm. The catalysed reaction is dUMP + (6R)-5,10-methylene-5,6,7,8-tetrahydrofolate = 7,8-dihydrofolate + dTMP. It functions in the pathway pyrimidine metabolism; dTTP biosynthesis. Functionally, catalyzes the reductive methylation of 2'-deoxyuridine-5'-monophosphate (dUMP) to 2'-deoxythymidine-5'-monophosphate (dTMP) while utilizing 5,10-methylenetetrahydrofolate (mTHF) as the methyl donor and reductant in the reaction, yielding dihydrofolate (DHF) as a by-product. This enzymatic reaction provides an intracellular de novo source of dTMP, an essential precursor for DNA biosynthesis. This is Thymidylate synthase from Stutzerimonas stutzeri (strain A1501) (Pseudomonas stutzeri).